We begin with the raw amino-acid sequence, 100 residues long: Urease subunit gamma (100 aa).

This sequence belongs to the urease gamma subunit family. Heterotrimer of UreA (gamma), UreB (beta) and UreC (alpha) subunits. Three heterotrimers associate to form the active enzyme.

It is found in the cytoplasm. The catalysed reaction is urea + 2 H2O + H(+) = hydrogencarbonate + 2 NH4(+). Its pathway is nitrogen metabolism; urea degradation; CO(2) and NH(3) from urea (urease route): step 1/1. This chain is Urease subunit gamma, found in Lachnoclostridium phytofermentans (strain ATCC 700394 / DSM 18823 / ISDg) (Clostridium phytofermentans).